Reading from the N-terminus, the 368-residue chain is tRNA 2-selenouridine synthase (368 aa).

The Rhodanese domain occupies 12–136 (FLGDAPLLDT…MRGFLLETIE (125 aa)). The active-site S-selanylcysteine intermediate is the Cys95.

It belongs to the SelU family. As to quaternary structure, monomer.

It catalyses the reaction 5-methylaminomethyl-2-thiouridine(34) in tRNA + selenophosphate + (2E)-geranyl diphosphate + H2O + H(+) = 5-methylaminomethyl-2-selenouridine(34) in tRNA + (2E)-thiogeraniol + phosphate + diphosphate. The catalysed reaction is 5-methylaminomethyl-2-thiouridine(34) in tRNA + (2E)-geranyl diphosphate = 5-methylaminomethyl-S-(2E)-geranyl-thiouridine(34) in tRNA + diphosphate. The enzyme catalyses 5-methylaminomethyl-S-(2E)-geranyl-thiouridine(34) in tRNA + selenophosphate + H(+) = 5-methylaminomethyl-2-(Se-phospho)selenouridine(34) in tRNA + (2E)-thiogeraniol. It carries out the reaction 5-methylaminomethyl-2-(Se-phospho)selenouridine(34) in tRNA + H2O = 5-methylaminomethyl-2-selenouridine(34) in tRNA + phosphate. Its function is as follows. Involved in the post-transcriptional modification of the uridine at the wobble position (U34) of tRNA(Lys), tRNA(Glu) and tRNA(Gln). Catalyzes the conversion of 2-thiouridine (S2U-RNA) to 2-selenouridine (Se2U-RNA). Acts in a two-step process involving geranylation of 2-thiouridine (S2U) to S-geranyl-2-thiouridine (geS2U) and subsequent selenation of the latter derivative to 2-selenouridine (Se2U) in the tRNA chain. This is tRNA 2-selenouridine synthase from Bordetella bronchiseptica (strain ATCC BAA-588 / NCTC 13252 / RB50) (Alcaligenes bronchisepticus).